Consider the following 859-residue polypeptide: ATP-dependent RNA helicase DDX24 (859 aa).

N6-acetyllysine is present on Lys-17. Ser-60 carries the post-translational modification Phosphoserine. Residues 61–175 form a disordered region; sequence PAKNPSSLFS…SQSTAAKVPK (115 aa). At Lys-71 the chain carries N6-acetyllysine. Ser-82 and Ser-94 each carry phosphoserine. Residues 82-91 are compositionally biased toward acidic residues; the sequence is SEEEEEEEGE. The span at 95 to 105 shows a compositional bias: basic residues; it reads PKKKIKLKKSK. Polar residues predominate over residues 106–115; sequence NVATEGTSTQ. The Q motif signature appears at 192–220; the sequence is SAWKDLFVPRPVLRALSFLGFSAPTPIQV. Positions 224 to 528 constitute a Helicase ATP-binding domain; that stretch reads APAIRDKLDI…RILHKKHTKK (305 aa). 237–244 contributes to the ATP binding site; sequence AETGSGKT. A disordered region spans residues 262–374; that stretch reads NAAPPPSNTE…QTGNLKQELD (113 aa). Residues 277–293 show a composition bias toward basic and acidic residues; sequence TRPEAGAETRSPGKAEA. A phosphoserine mark is found at Ser-287 and Ser-295. Residues 294 to 304 show a composition bias toward acidic residues; it reads ESDALPDDTVI. Thr-302 is subject to Phosphothreonine. A Glycyl lysine isopeptide (Lys-Gly) (interchain with G-Cter in SUMO2) cross-link involves residue Lys-370. The DEAD box motif lies at 471 to 474; it reads DEAD. A Helicase C-terminal domain is found at 578 to 723; that stretch reads YLYYFLMQYP…LFPVQTKYMD (146 aa). Residues Lys-624, Lys-808, and Lys-825 each participate in a glycyl lysine isopeptide (Lys-Gly) (interchain with G-Cter in SUMO2) cross-link. Polar residues-rich tracts occupy residues 799–814 and 823–834; these read PLFT…TQSG and PSKSESALSCLS. Positions 799-859 are disordered; it reads PLFTESQKTK…EQPQPSTSAN (61 aa).

This sequence belongs to the DEAD box helicase family. DDX24/MAK5 subfamily. As to quaternary structure, interacts with FADD. Interacts with RIPK1; this interaction disrupts RLR signaling activation of IFN-dependent transcription factor IRF7. Interacts with NIP7. Interacts with EP300; this interaction prevents TP53 acetylation mediated by EP300. Ubiquitinated by MDM2 without targeting DDX24 for proteasomal degradation. Instead, polyubiquitylated DDX24 promotes interaction with NIP7, a component of pre-rRNP processing complex, and associates with pre-rRNA molecules and pre-ribosomal particles.

It localises to the cytoplasm. It is found in the nucleus. It carries out the reaction ATP + H2O = ADP + phosphate + H(+). Its function is as follows. ATP-dependent RNA helicase that plays a role in various aspects of RNA metabolism including pre-mRNA splicing and is thereby involved in different biological processes such as cell cycle regulation or innate immunity. Plays an inhibitory role in TP53 transcriptional activity and subsequently in TP53 controlled cell growth arrest and senescence by inhibiting its EP300 mediated acetylation. Negatively regulates cytosolic RNA-mediated innate immune signaling at least in part by affecting RIPK1/IRF7 interactions. Alternatively, possesses antiviral activity by recognizing gammaherpesvirus transcripts in the context of lytic reactivation. Plays an essential role in cell cycle regulation in vascular smooth muscle cells by interacting with and regulating FANCA (Fanconi anemia complementation group A) mRNA. The chain is ATP-dependent RNA helicase DDX24 (DDX24) from Pongo abelii (Sumatran orangutan).